The primary structure comprises 372 residues: DNA replication and repair protein RecF (372 aa).

Residue 30-37 coordinates ATP; the sequence is GANGQGKT.

The protein belongs to the RecF family.

The protein resides in the cytoplasm. Its function is as follows. The RecF protein is involved in DNA metabolism; it is required for DNA replication and normal SOS inducibility. RecF binds preferentially to single-stranded, linear DNA. It also seems to bind ATP. This is DNA replication and repair protein RecF from Heliobacterium modesticaldum (strain ATCC 51547 / Ice1).